We begin with the raw amino-acid sequence, 120 residues long: Small ribosomal subunit protein uS13 (120 aa).

The interval 92-120 (RRGLPCRGQRTRTNARTRKGPRKPIAGKK) is disordered.

It belongs to the universal ribosomal protein uS13 family. As to quaternary structure, part of the 30S ribosomal subunit. Forms a loose heterodimer with protein S19. Forms two bridges to the 50S subunit in the 70S ribosome.

Its function is as follows. Located at the top of the head of the 30S subunit, it contacts several helices of the 16S rRNA. In the 70S ribosome it contacts the 23S rRNA (bridge B1a) and protein L5 of the 50S subunit (bridge B1b), connecting the 2 subunits; these bridges are implicated in subunit movement. Contacts the tRNAs in the A and P-sites. The protein is Small ribosomal subunit protein uS13 of Laribacter hongkongensis (strain HLHK9).